The following is a 288-amino-acid chain: Rhox homeobox family member 2 (288 aa).

A disordered region spans residues 16 to 136 (SPAVDDEKEL…GLEPGNAQQP (121 aa)). A compositionally biased stretch (acidic residues) spans 39–48 (VKEEEEDAQP). The span at 68–80 (GEEKDGGGEEKDG) shows a compositional bias: basic and acidic residues. A DNA-binding region (homeobox) is located at residues 134–193 (QQPNVHAFTPLQLQELERIFQREQFPSEFLRRRLARSMNVTELAVQIWFENRRAKWRRHQ). The Nuclear localization signal signature appears at 186-195 (RAKWRRHQRA).

Belongs to the paired-like homeobox family. PEPP subfamily. Testis. Not detected in epididymis nor placenta. In testis, mainly expressed in germ cells, but also detected in somatic cells such as Sertoli cells, Leydig cells and peritubular cells.

It localises to the nucleus. In terms of biological role, transcription factor maybe involved in reproductive processes. Modulates expression of target genes encoding proteins involved in processes relevant to spermatogenesis. This is Rhox homeobox family member 2 from Homo sapiens (Human).